We begin with the raw amino-acid sequence, 138 residues long: Ferredoxin-2 (138 aa).

A 2Fe-2S ferredoxin-type domain is found at 27–117; sequence ADANLQSTDF…DAKIVYNLKH (91 aa). Residues cysteine 62, cysteine 67, cysteine 70, and cysteine 100 each contribute to the [2Fe-2S] cluster site.

It belongs to the 2Fe2S plant-type ferredoxin family. The cofactor is [2Fe-2S] cluster.

In terms of biological role, ferredoxins are iron-sulfur proteins that transfer electrons in a wide variety of metabolic reactions. The sequence is that of Ferredoxin-2 (fer2) from Haloarcula marismortui (strain ATCC 43049 / DSM 3752 / JCM 8966 / VKM B-1809) (Halobacterium marismortui).